A 193-amino-acid polypeptide reads, in one-letter code: Molybdopterin synthase catalytic subunit (193 aa).

Substrate is bound by residues 118 to 119 (HR), Lys-134, and 141 to 143 (KKE). The segment at 159–193 (DRTTTDGTTASSPAPATRPAKGGGCCGRKVRVNES) is disordered. Over residues 163-178 (TDGTTASSPAPATRPA) the composition is skewed to low complexity.

This sequence belongs to the MoaE family. MOCS2B subfamily. In terms of assembly, heterotetramer; composed of 2 small (MOCS2A) and 2 large (MOCS2B) subunits.

The protein localises to the cytoplasm. It carries out the reaction 2 [molybdopterin-synthase sulfur-carrier protein]-C-terminal-Gly-aminoethanethioate + cyclic pyranopterin phosphate + H2O = molybdopterin + 2 [molybdopterin-synthase sulfur-carrier protein]-C-terminal Gly-Gly + 2 H(+). It participates in cofactor biosynthesis; molybdopterin biosynthesis. Catalytic subunit of the molybdopterin synthase complex, a complex that catalyzes the conversion of precursor Z into molybdopterin. Acts by mediating the incorporation of 2 sulfur atoms from thiocarboxylated MOCS2A into precursor Z to generate a dithiolene group. This chain is Molybdopterin synthase catalytic subunit, found in Oryza sativa subsp. japonica (Rice).